The sequence spans 307 residues: Taste receptor type 2 member 10 (307 aa).

Topologically, residues 1-6 (MLRVVE) are extracellular. The helical transmembrane segment at 7-27 (GIFIFVVISESVFGVLGNGFI) threads the bilayer. Residues 28 to 42 (GLVNCIDCAKNKLST) are Cytoplasmic-facing. A helical membrane pass occupies residues 43-63 (IGFILTGLAISRIFLIWIIIT). The Extracellular portion of the chain corresponds to 64 to 100 (DGFIQIFSPNIYASSNLIEYISYFWVIGNQSSMWFAT). A helical membrane pass occupies residues 101–121 (SLSIFYFLKIANFSNYIFLWL). Topologically, residues 122–126 (KSRTN) are cytoplasmic. The chain crosses the membrane as a helical span at residues 127–147 (MVLPFMIVFLLISSLLNFAYI). The Extracellular portion of the chain corresponds to 148–179 (AKILNDYKMKNDTVWDLNMYKSEYFIKQILLN). N-linked (GlcNAc...) asparagine glycosylation occurs at Asn158. The chain crosses the membrane as a helical span at residues 180 to 200 (LGVIFFFTLSLITCVLLIISL). The Cytoplasmic segment spans residues 201–227 (WRHNRQMQSNVTGLRDSNTEAHVKAMK). The helical transmembrane segment at 228–248 (VLISFIILFILYFIGMAIEIS) threads the bilayer. At 249 to 257 (YFTVRENKL) the chain is on the extracellular side. The helical transmembrane segment at 258 to 278 (LLMFGMTTTAIYPWGHSFILI) threads the bilayer. At 279 to 307 (LGNSKLKQASLRVLQQLKCCEKRKNLRVT) the chain is on the cytoplasmic side.

This sequence belongs to the G-protein coupled receptor T2R family.

The protein localises to the membrane. In terms of biological role, receptor that may play a role in the perception of bitterness and is gustducin-linked. May play a role in sensing the chemical composition of the gastrointestinal content. The activity of this receptor may stimulate alpha gustducin, mediate PLC-beta-2 activation and lead to the gating of TRPM5. The sequence is that of Taste receptor type 2 member 10 (TAS2R10) from Pan paniscus (Pygmy chimpanzee).